The primary structure comprises 141 residues: Hemoglobin subunit alpha-A (141 aa).

The Globin domain occupies 1 to 141; it reads VLSGSDKTNV…VGNVLTAKYR (141 aa). O2 is bound at residue His-58. His-87 is a binding site for heme b.

The protein belongs to the globin family. In terms of assembly, heterotetramer of two alpha chains and two beta chains. In terms of tissue distribution, red blood cells.

Involved in oxygen transport from the lung to the various peripheral tissues. This chain is Hemoglobin subunit alpha-A (HBAA), found in Chroicocephalus ridibundus (Black-headed gull).